Consider the following 592-residue polypeptide: Inactive metallocarboxypeptidase ecm14 (592 aa).

The N-terminal stretch at 1 to 22 (MYRQDHVFVVLCAVLLAGQVTA) is a signal peptide. Positions 23 to 175 (VPAGTGINPH…AIYESRYPTR (153 aa)) are excised as a propeptide. A Peptidase M14 domain is found at 203 to 524 (HYQPFNVILQ…NSVLVLGHFL (322 aa)). 2 residues coordinate Zn(2+): His267 and Glu270. Residues 267-270 (HARE), Arg325, and 342-343 (DR) each bind substrate. Cys336 and Cys359 are disulfide-bonded. The N-linked (GlcNAc...) asparagine glycan is linked to Asn383. Zn(2+) is bound at residue His399. A substrate-binding site is contributed by 400–401 (SY). A glycan (N-linked (GlcNAc...) asparagine) is linked at Asn548.

Belongs to the peptidase M14 family. It depends on Zn(2+) as a cofactor.

The protein localises to the vacuole. Its subcellular location is the secreted. Inactive carboxypeptidase that may play a role in cell wall organization and biogenesis. In Talaromyces stipitatus (strain ATCC 10500 / CBS 375.48 / QM 6759 / NRRL 1006) (Penicillium stipitatum), this protein is Inactive metallocarboxypeptidase ecm14 (ecm14).